We begin with the raw amino-acid sequence, 176 residues long: Peptide methionine sulfoxide reductase MsrA (176 aa).

The active site involves Cys-12.

This sequence belongs to the MsrA Met sulfoxide reductase family.

The catalysed reaction is L-methionyl-[protein] + [thioredoxin]-disulfide + H2O = L-methionyl-(S)-S-oxide-[protein] + [thioredoxin]-dithiol. The enzyme catalyses [thioredoxin]-disulfide + L-methionine + H2O = L-methionine (S)-S-oxide + [thioredoxin]-dithiol. In terms of biological role, has an important function as a repair enzyme for proteins that have been inactivated by oxidation. Catalyzes the reversible oxidation-reduction of methionine sulfoxide in proteins to methionine. The chain is Peptide methionine sulfoxide reductase MsrA from Thermus thermophilus (strain ATCC 27634 / DSM 579 / HB8).